We begin with the raw amino-acid sequence, 5084 residues long: Apicidin F synthase (5084 aa).

The tract at residues 209-606 (ARILQRQPDK…VGRLDSQVKL (398 aa)) is adenylation 1. The Carrier 1 domain occupies 731–808 (HETDNCQRLL…EAASSMREVV (78 aa)). The residue at position 768 (Ser768) is an O-(pantetheine 4'-phosphoryl)serine. Condensation regions lie at residues 822–1124 (YPLS…FPIY) and 1309–1609 (EIYC…SILV). Residues 1788 to 2192 (EDPTREAVFS…IGRKDNQIKI (405 aa)) are adenylation 2. Residues 2341 to 2415 (VVKDDPVSEL…DMAKGMAPLS (75 aa)) form the Carrier 2 domain. The residue at position 2376 (Ser2376) is an O-(pantetheine 4'-phosphoryl)serine. Residues 2415–2441 (SLTAPESTSSSSPQSFSTSTSTTIIEN) form a disordered region. Low complexity predominate over residues 2421-2437 (STSSSSPQSFSTSTSTT). Residues 2478 to 2755 (EDIFPCTPMQ…IVTLPRQLNI (278 aa)) form a condensation 3 region. Positions 2935 to 3328 (RNNPRARAVV…GRRDGQIKLR (394 aa)) are adenylation 3. Residues 3463–3539 (ETWSSSEAIV…DMASRLSRPE (77 aa)) enclose the Carrier 3 domain. Ser3500 is subject to O-(pantetheine 4'-phosphoryl)serine. A condensation 4 region spans residues 3581–3866 (EDIYPCTPLQ…IATVPSRTTI (286 aa)). The segment at 4029–4426 (RKQVELSPSH…TVSWIGRKDH (398 aa)) is adenylation 4. The Carrier 4 domain occupies 4554 to 4631 (ALKTPKERLL…DMADLLGPLR (78 aa)). Ser4592 carries the post-translational modification O-(pantetheine 4'-phosphoryl)serine. A condensation 5 region spans residues 4669–4948 (EQIYPCTAYQ…ISKLPLRIQL (280 aa)).

The protein belongs to the NRP synthetase family.

It participates in secondary metabolite biosynthesis. Its function is as follows. Non-ribosomal peptide synthetase; part of the gene cluster that mediates the biosynthesis of the cyclic tetrapeptide apicidin F (APF). The non-ribosomal peptide synthetase apf1 incorporates four different amino acids to produce apicidin F: L-phenylalanine, D-pipecolic acid (D-pip), N-methoxy-L-tryptophan and L-2-aminooctanedioic acid. L-Phenylalanine is the only proteinogenic amino acid directly used by apf1. The 3 other apf1 substrates are non-proteinogenic and have to be modified by other enzymes of the cluster. Lysine is converted to delta-1-pyrroline-5-carboxylate (P5C) which is reduced to L-pipecolic acid (L-pip) by apf3. L-pip is epimerized to D-pip, probably by apf1 activity, prior to incorporation. L-Tryptophan is N-oxidyzed by one of the cytochrome P450 monooxygenases (apf7 or apf8), and further methylated at the hydroxy group by the O-methyltransferase apf6 to yield N-methoxy-L-tryptophan. The synthesis of the fourth apf1 substrate is more complex. The fatty acid synthase apf5 is involved in the synthesis of the octanoic acid backbone of L-2-aminooctanedioic acid by fixing one acetyl-CoA unit and three malonyl-CoA units. Then one of the cytochrome P450 monooxygenases (apf7 or apf8) may oxidize this backbone to 2-oxooctanoic acid. The aminotransferase apf4 is predicted to catalyze the exchange of the keto group with an amino group. The next step would be the oxidation of 2-aminooctanoic acid by one of the cytochrome P450 monooxygenases (apf7 or apf8). The last step is the oxidation of 2-amino-8-hydroxyoctanoic acid to 2-aminooctanedioic acid is catalyzed by the FAD-dependent monooxygenase apf9. The chain is Apicidin F synthase from Gibberella fujikuroi (strain CBS 195.34 / IMI 58289 / NRRL A-6831) (Bakanae and foot rot disease fungus).